A 226-amino-acid polypeptide reads, in one-letter code: Enolase-phosphatase E1 (226 aa).

This sequence belongs to the HAD-like hydrolase superfamily. MasA/MtnC family. Monomer. It depends on Mg(2+) as a cofactor.

The catalysed reaction is 5-methylsulfanyl-2,3-dioxopentyl phosphate + H2O = 1,2-dihydroxy-5-(methylsulfanyl)pent-1-en-3-one + phosphate. The protein operates within amino-acid biosynthesis; L-methionine biosynthesis via salvage pathway; L-methionine from S-methyl-5-thio-alpha-D-ribose 1-phosphate: step 3/6. It participates in amino-acid biosynthesis; L-methionine biosynthesis via salvage pathway; L-methionine from S-methyl-5-thio-alpha-D-ribose 1-phosphate: step 4/6. Functionally, bifunctional enzyme that catalyzes the enolization of 2,3-diketo-5-methylthiopentyl-1-phosphate (DK-MTP-1-P) into the intermediate 2-hydroxy-3-keto-5-methylthiopentenyl-1-phosphate (HK-MTPenyl-1-P), which is then dephosphorylated to form the acireductone 1,2-dihydroxy-3-keto-5-methylthiopentene (DHK-MTPene). In Shewanella sp. (strain ANA-3), this protein is Enolase-phosphatase E1.